The chain runs to 205 residues: Ribosomal RNA small subunit methyltransferase G 1 (205 aa).

S-adenosyl-L-methionine is bound by residues Gly-77, Leu-82, 100–102 (EKS), 129–130 (LE), and Arg-138.

It belongs to the methyltransferase superfamily. RNA methyltransferase RsmG family.

The protein resides in the cytoplasm. It catalyses the reaction guanosine(527) in 16S rRNA + S-adenosyl-L-methionine = N(7)-methylguanosine(527) in 16S rRNA + S-adenosyl-L-homocysteine. Its function is as follows. Specifically methylates the N7 position of guanine in position 527 of 16S rRNA. In Bdellovibrio bacteriovorus (strain ATCC 15356 / DSM 50701 / NCIMB 9529 / HD100), this protein is Ribosomal RNA small subunit methyltransferase G 1.